Reading from the N-terminus, the 473-residue chain is Photosystem II CP43 reaction center protein (473 aa).

Residues 1 to 14 (MKTLYSPRRFYPVE) constitute a propeptide that is removed on maturation. Thr-15 bears the N-acetylthreonine mark. Position 15 is a phosphothreonine (Thr-15). Helical transmembrane passes span 69-93 (LFEV…PHLA), 134-155 (LIGP…KDRN), 178-200 (KALF…RKIT), 255-275 (KPFA…LSYS), and 291-312 (WFNN…ASQA). Glu-367 is a [CaMn4O5] cluster binding site. A helical transmembrane segment spans residues 447 to 471 (RARAAAAGFEKGIDRDLEPVLFMTP).

This sequence belongs to the PsbB/PsbC family. PsbC subfamily. As to quaternary structure, PSII is composed of 1 copy each of membrane proteins PsbA, PsbB, PsbC, PsbD, PsbE, PsbF, PsbH, PsbI, PsbJ, PsbK, PsbL, PsbM, PsbT, PsbX, PsbY, PsbZ, Psb30/Ycf12, at least 3 peripheral proteins of the oxygen-evolving complex and a large number of cofactors. It forms dimeric complexes. Binds multiple chlorophylls and provides some of the ligands for the Ca-4Mn-5O cluster of the oxygen-evolving complex. It may also provide a ligand for a Cl- that is required for oxygen evolution. PSII binds additional chlorophylls, carotenoids and specific lipids. serves as cofactor.

Its subcellular location is the plastid. It localises to the chloroplast thylakoid membrane. Functionally, one of the components of the core complex of photosystem II (PSII). It binds chlorophyll and helps catalyze the primary light-induced photochemical processes of PSII. PSII is a light-driven water:plastoquinone oxidoreductase, using light energy to abstract electrons from H(2)O, generating O(2) and a proton gradient subsequently used for ATP formation. The polypeptide is Photosystem II CP43 reaction center protein (Gnetum parvifolium (Small-leaved jointfir)).